A 289-amino-acid polypeptide reads, in one-letter code: Probable aquaporin PIP-type 7a (289 aa).

A disordered region spans residues 1-39; that stretch reads MEAKEQDVSLGANKFPERQPLGIAAQSQDEPKDYQEPPP. Residues 1-57 lie on the Cytoplasmic side of the membrane; that stretch reads MEAKEQDVSLGANKFPERQPLGIAAQSQDEPKDYQEPPPAPLFEPSELTSWSFYRAG. The helical transmembrane segment at 58–78 threads the bilayer; that stretch reads IAEFIATFLFLYITVLTVMGV. The Extracellular portion of the chain corresponds to 79-91; it reads VRESSKCKTVGIQ. The chain crosses the membrane as a helical span at residues 92–112; sequence GIAWAFGGMIFALVYCTAGIS. Topologically, residues 113-135 are cytoplasmic; that stretch reads GGHINPAVTFGLFLARKLSLTRA. Residues 117 to 119 carry the NPA 1 motif; that stretch reads NPA. Residues 136–156 form a helical membrane-spanning segment; that stretch reads IFYMVMQVLGAICGAGVVKGF. Over 157–178 the chain is Extracellular; sequence EGKQRFGDLNGGANFVAPGYTK. A helical transmembrane segment spans residues 179-199; it reads GDGLGAEIVGTFILVYTVFSA. Over 200–212 the chain is Cytoplasmic; that stretch reads TDAKRSARDSHVP. Residues 213–233 form a helical membrane-spanning segment; it reads ILAPLPIGFAVFLVHLATIPI. The Extracellular segment spans residues 234-260; sequence TGTGINPARSLGAAIVFNKKIGWNDHW. The NPA 2 signature appears at 239 to 241; it reads NPA. The chain crosses the membrane as a helical span at residues 261–281; that stretch reads IFWVGPFIGAALAALYHQVVI. The Cytoplasmic segment spans residues 282–289; the sequence is RAIPFKSK.

This sequence belongs to the MIP/aquaporin (TC 1.A.8) family. PIP (TC 1.A.8.11) subfamily.

It is found in the cell membrane. Its function is as follows. Aquaporins facilitate the transport of water and small neutral solutes across cell membranes. This Pisum sativum (Garden pea) protein is Probable aquaporin PIP-type 7a (TRG-31).